Reading from the N-terminus, the 354-residue chain is Guanine nucleotide-binding protein G(i) subunit alpha-1 (354 aa).

Gly2 is lipidated: N-myristoyl glycine. Cys3 carries S-palmitoyl cysteine lipidation. One can recognise a G-alpha domain in the interval 32 to 354; it reads REVKLLLLGA…KNNLKDCGLF (323 aa). The tract at residues 35–48 is G1 motif; it reads KLLLLGAGESGKST. Residues 43 to 48, 150 to 151, and 175 to 178 contribute to the GTP site; these read ESGKST, DS, and LRTR. Position 47 (Ser47) interacts with Mg(2+). The tract at residues 173–181 is G2 motif; that stretch reads DVLRTRVKT. Thr181 serves as a coordination point for Mg(2+). Residues 196 to 205 form a G3 motif region; it reads FKMFDVGGQR. GTP is bound by residues 200–204, 269–272, and Ala326; these read DVGGQ and NKKD. The tract at residues 265–272 is G4 motif; sequence ILFLNKKD. Positions 324-329 are G5 motif; that stretch reads TCATDT.

Belongs to the G-alpha family. G(i/o/t/z) subfamily. As to quaternary structure, heterotrimeric G proteins are composed of 3 units; alpha, beta and gamma. The alpha chain contains the guanine nucleotide binding site. Part of a spindle orientation complex at least composed of GNAI1, GPSM2 and NUMA1. Identified in complex with the beta subunit GNB1 and the gamma subunit GNG1. Identified in complex with the beta subunit GNB1 and the gamma subunit GNG2. Component of the TAS2R14-GNAI1 complex, consisting of TAS2R14, GNAI1, GNB1 and GNG2; within the complex interacts with TAS2R14; this complex plays a role in the perception of bitterness. GTP binding causes dissociation of the heterotrimer, liberating the individual subunits so that they can interact with downstream effector proteins. Interacts (GDP-bound form) with GPSM1; this inhibits guanine nucleotide exchange and GTP binding. Interacts (GDP-bound form) with GPSM2 (via GoLoco domains); this inhibits guanine nucleotide exchange. Interacts with RGS10; this strongly enhances GTP hydrolysis. Interacts with RGS1 and RGS16; this strongly enhances GTPase activity. Interacts with RGS4. Interacts with RGS12. Interacts (via active GTP- or inactive GDP-bound forms) with RGS14 (via RGS and GoLoco domains). Interacts with RGS3, RGS6, RGS7, RGS8, RGS17, RGS18 and RGS20 (in vitro). Interacts (GDP-bound form) with RIC8A (via C-terminus); promoting GNAI1 folding and association with the plasma membrane. Interacts (inactive GDP-bound form) with NUCB1 (via GBA motif); the interaction leads to activation of GNAI1. Interacts (inactive GDP-bound form) with CCDC88C/DAPLE (via GBA motif); the interaction leads to activation of GNAI1. Interacts (inactive GDP-bound form) with CCDC8A/GIV (via GBA motif). Post-translationally, myristoylation at Gly-2 is required for membrane anchoring before palmitoylation. Palmitoylation at Cys-3 varies with membrane lipid composition. In terms of tissue distribution, mainly expressed in the brain, lung and kidney.

It is found in the nucleus. It localises to the cytoplasm. The protein resides in the cell membrane. The protein localises to the cytoskeleton. Its subcellular location is the microtubule organizing center. It is found in the centrosome. It localises to the cell cortex. The protein resides in the membrane. The catalysed reaction is GTP + H2O = GDP + phosphate + H(+). In terms of biological role, guanine nucleotide-binding proteins (G proteins) function as transducers downstream of G protein-coupled receptors (GPCRs) in numerous signaling cascades. The alpha chain contains the guanine nucleotide binding site and alternates between an active, GTP-bound state and an inactive, GDP-bound state. Signaling by an activated GPCR promotes GDP release and GTP binding. The alpha subunit has a low GTPase activity that converts bound GTP to GDP, thereby terminating the signal. Both GDP release and GTP hydrolysis are modulated by numerous regulatory proteins. Signaling is mediated via effector proteins, such as adenylate cyclase. Inhibits adenylate cyclase activity of ADCY1, ADCY5 and ADCY6, leading to decreased intracellular cAMP levels. The inactive GDP-bound form prevents the association of RGS14 with centrosomes and is required for the translocation of RGS14 from the cytoplasm to the plasma membrane. Required for normal cytokinesis during mitosis. Required for cortical dynein-dynactin complex recruitment during metaphase. This chain is Guanine nucleotide-binding protein G(i) subunit alpha-1 (GNAI1), found in Cavia porcellus (Guinea pig).